The following is a 122-amino-acid chain: Large ribosomal subunit protein uL14 (122 aa).

This sequence belongs to the universal ribosomal protein uL14 family. In terms of assembly, part of the 50S ribosomal subunit. Forms a cluster with proteins L3 and L19. In the 70S ribosome, L14 and L19 interact and together make contacts with the 16S rRNA in bridges B5 and B8.

Its function is as follows. Binds to 23S rRNA. Forms part of two intersubunit bridges in the 70S ribosome. This Latilactobacillus sakei subsp. sakei (strain 23K) (Lactobacillus sakei subsp. sakei) protein is Large ribosomal subunit protein uL14.